A 326-amino-acid polypeptide reads, in one-letter code: Beta-1,3-galactosyltransferase 1 (326 aa).

Residues Met1–Ser6 are Cytoplasmic-facing. A helical; Signal-anchor for type II membrane protein transmembrane segment spans residues Cys7–Thr26. Residues Arg27 to Cys326 lie on the Lumenal side of the membrane. N-linked (GlcNAc...) asparagine glycans are attached at residues Asn47 and Asn151.

The protein belongs to the glycosyltransferase 31 family. Requires Mn(2+) as cofactor.

It localises to the golgi apparatus membrane. The catalysed reaction is an N-acetyl-beta-D-glucosaminyl derivative + UDP-alpha-D-galactose = a beta-D-galactosyl-(1-&gt;3)-N-acetyl-beta-D-glucosaminyl derivative + UDP + H(+). It catalyses the reaction a beta-D-GlcNAc-(1-&gt;3)-beta-D-Gal-(1-&gt;4)-beta-D-Glc-(1&lt;-&gt;1)-Cer(d18:1(4E)) + UDP-alpha-D-galactose = a beta-D-Gal-(1-&gt;3)-beta-D-GlcNAc-(1-&gt;3)-beta-D-Gal-(1-&gt;4)-beta-D-Glc-(1&lt;-&gt;1')-Cer(d18:1(4E)) + UDP + H(+). The protein operates within protein modification; protein glycosylation. Beta-1,3-galactosyltransferase that transfers galactose from UDP-galactose to substrates with a terminal beta-N-acetylglucosamine (beta-GlcNAc) residue. Involved in the biosynthesis of the carbohydrate moieties of glycolipids and glycoproteins. The protein is Beta-1,3-galactosyltransferase 1 (B3GALT1) of Gorilla gorilla gorilla (Western lowland gorilla).